A 444-amino-acid chain; its full sequence is 23S rRNA (uracil(1939)-C(5))-methyltransferase RlmD (444 aa).

The 60-residue stretch at 5–64 (KPKLNLTSQTARIVNLSHDGRGIARINGKATFIQGALPGEVVEFQYTRVKKDFDEGKLLS) folds into the TRAM domain. Cys77, Cys83, Cys86, and Cys166 together coordinate [4Fe-4S] cluster. S-adenosyl-L-methionine contacts are provided by Gln276, Phe305, Asn310, Glu326, Asn353, and Asp374. Cys400 serves as the catalytic Nucleophile.

Belongs to the class I-like SAM-binding methyltransferase superfamily. RNA M5U methyltransferase family. RlmD subfamily.

It carries out the reaction uridine(1939) in 23S rRNA + S-adenosyl-L-methionine = 5-methyluridine(1939) in 23S rRNA + S-adenosyl-L-homocysteine + H(+). Functionally, catalyzes the formation of 5-methyl-uridine at position 1939 (m5U1939) in 23S rRNA. The polypeptide is 23S rRNA (uracil(1939)-C(5))-methyltransferase RlmD (Legionella pneumophila (strain Lens)).